The chain runs to 718 residues: Cyclomaltodextrin glucanotransferase (718 aa).

The signal sequence occupies residues 1-34 (MFQMAKRAFLSTTLTLGLLAGSALPFLPASAVYA). Residues 35 to 172 (DPDTAVTNKQ…GIKIVIDFAP (138 aa)) are A1. Residues D61, N63, N66, and N67 each coordinate Ca(2+). A disulfide bridge links C77 with C84. The Ca(2+) site is built by G85 and D87. 134–135 (YW) is a binding site for substrate. N173 contacts Ca(2+). Positions 173-236 (NHTSPAMETD…NLYDLADFNH (64 aa)) are b. H174 is a substrate binding site. Position 224 (I224) interacts with Ca(2+). Substrate contacts are provided by residues 227 to 230 (NLYD) and D230. D233 is a binding site for Ca(2+). The interval 237-440 (NNATIDKYFK…LRKSNPAIAY (204 aa)) is A2. Residue R261 participates in substrate binding. Residue D263 is the Nucleophile of the active site. Substrate is bound by residues 266–267 (KH) and H267. H267 contributes to the Ca(2+) binding site. The active-site Proton donor is the E291. Residues H361, D405, and R409 each contribute to the substrate site. Positions 441–528 (GSTQQRWINN…ATAVWQYTTA (88 aa)) are c. Positions 529–614 (ETTPTIGHVG…SNAYNNFTIL (86 aa)) are d. In terms of domain architecture, IPT/TIG spans 532–612 (PTIGHVGPVM…VNSNAYNNFT (81 aa)). One can recognise a CBM20 domain in the interval 613–718 (ILTGDQVTVR…GTATVTVNWQ (106 aa)). The segment at 615-718 (TGDQVTVRFV…GTATVTVNWQ (104 aa)) is e.

It belongs to the glycosyl hydrolase 13 family. Monomer. It depends on Ca(2+) as a cofactor.

It is found in the secreted. It carries out the reaction Cyclizes part of a (1-&gt;4)-alpha-D-glucan chain by formation of a (1-&gt;4)-alpha-D-glucosidic bond.. This is Cyclomaltodextrin glucanotransferase from Niallia circulans (Bacillus circulans).